A 225-amino-acid chain; its full sequence is THAP domain-containing protein 1 A (225 aa).

Residues 5 to 57 (CSAYGCKNRYDKDKPISFHKFPLKRPLLCKKWEAAVRRAEFKPTKYSSICSDH) form a THAP-type zinc finger. Residues 139–194 (VEDTVHQRRRIQQLEEQVDKLRKKLKIANQKCRRQERSLEKLEREVSEYREAKGSG) adopt a coiled-coil conformation.

The protein belongs to the THAP1 family.

It localises to the nucleus. It is found in the nucleoplasm. In terms of biological role, DNA-binding transcription regulator that regulates endothelial cell proliferation and G1/S cell-cycle progression. Specifically binds the 5'-[AT]NTNN[GT]GGCA[AGT]-3' core DNA sequence and acts by modulating expression of pRB-E2F cell-cycle target genes. The protein is THAP domain-containing protein 1 A (thap1-a) of Xenopus laevis (African clawed frog).